Reading from the N-terminus, the 257-residue chain is MPCHNQQLNNNSESPEHAAKHVRFAQSSAAAAETCQNDAEQPEYQTTSEIHQQIGPQLKLLPLNDQIRELQTIIRDKTTSRGDFVFCADRLIRLVVEEGLNQLPYSECTVTTPTGHKYEGVKFEKGNCGVSIMRSGEAMEQGLRDCCRSIRIGKILIQSDEETQKAKVYYAKFPPDISRRKVLLMYPILSTGNTVIEAVRVLTEHGLQAKHIILLSLFSTPHGARSIVQEFPDITILTTEVHAVAPTHFGQRYFGTD.

GTP-binding positions include Arg81, Arg90, and 124–127; that span reads EKGN. Arg134 contributes to the 5-phospho-alpha-D-ribose 1-diphosphate binding site. GTP contacts are provided by Arg151 and Arg180. 186–194 contributes to the 5-phospho-alpha-D-ribose 1-diphosphate binding site; it reads YPILSTGNT. 247 to 249 serves as a coordination point for uracil; the sequence is THF.

The protein belongs to the UPRTase family.

It is found in the cytoplasm. It localises to the nucleus. This Danio rerio (Zebrafish) protein is Uracil phosphoribosyltransferase homolog (uprt).